The chain runs to 142 residues: Large ribosomal subunit protein uL13 (142 aa).

This sequence belongs to the universal ribosomal protein uL13 family. Part of the 50S ribosomal subunit.

In terms of biological role, this protein is one of the early assembly proteins of the 50S ribosomal subunit, although it is not seen to bind rRNA by itself. It is important during the early stages of 50S assembly. The chain is Large ribosomal subunit protein uL13 from Vibrio campbellii (strain ATCC BAA-1116).